A 450-amino-acid polypeptide reads, in one-letter code: D-inositol 3-phosphate glycosyltransferase (450 aa).

A 1D-myo-inositol 3-phosphate-binding site is contributed by His-26. UDP-N-acetyl-alpha-D-glucosamine-binding positions include 32–33 (QP) and Gly-40. Residues 37–42 (DAGGMN), Lys-95, Tyr-128, Thr-152, and Arg-172 contribute to the 1D-myo-inositol 3-phosphate site. Positions 246, 251, and 313 each coordinate UDP-N-acetyl-alpha-D-glucosamine. Mg(2+) contacts are provided by Tyr-322, Arg-323, and Ala-325. Glu-335 and Glu-343 together coordinate UDP-N-acetyl-alpha-D-glucosamine. Thr-349 serves as a coordination point for Mg(2+).

This sequence belongs to the glycosyltransferase group 1 family. MshA subfamily. In terms of assembly, homodimer.

The catalysed reaction is 1D-myo-inositol 3-phosphate + UDP-N-acetyl-alpha-D-glucosamine = 1D-myo-inositol 2-acetamido-2-deoxy-alpha-D-glucopyranoside 3-phosphate + UDP + H(+). Catalyzes the transfer of a N-acetyl-glucosamine moiety to 1D-myo-inositol 3-phosphate to produce 1D-myo-inositol 2-acetamido-2-deoxy-glucopyranoside 3-phosphate in the mycothiol biosynthesis pathway. This Mycolicibacterium vanbaalenii (strain DSM 7251 / JCM 13017 / BCRC 16820 / KCTC 9966 / NRRL B-24157 / PYR-1) (Mycobacterium vanbaalenii) protein is D-inositol 3-phosphate glycosyltransferase.